A 165-amino-acid chain; its full sequence is Large ribosomal subunit protein uL10 (165 aa).

Belongs to the universal ribosomal protein uL10 family. In terms of assembly, part of the ribosomal stalk of the 50S ribosomal subunit. The N-terminus interacts with L11 and the large rRNA to form the base of the stalk. The C-terminus forms an elongated spine to which L12 dimers bind in a sequential fashion forming a multimeric L10(L12)X complex.

Forms part of the ribosomal stalk, playing a central role in the interaction of the ribosome with GTP-bound translation factors. This is Large ribosomal subunit protein uL10 from Shewanella piezotolerans (strain WP3 / JCM 13877).